The sequence spans 147 residues: UPF0735 ACT domain-containing protein GK2605 (147 aa).

Residues 69–144 enclose the ACT domain; the sequence is TLFFHLEDRS…FVEKVEIVGS (76 aa).

Belongs to the UPF0735 family.

The protein is UPF0735 ACT domain-containing protein GK2605 of Geobacillus kaustophilus (strain HTA426).